Here is a 737-residue protein sequence, read N- to C-terminus: 1,4-alpha-glucan branching enzyme GlgB (737 aa).

Catalysis depends on aspartate 419, which acts as the Nucleophile. The active-site Proton donor is the glutamate 472.

This sequence belongs to the glycosyl hydrolase 13 family. GlgB subfamily. In terms of assembly, monomer.

The enzyme catalyses Transfers a segment of a (1-&gt;4)-alpha-D-glucan chain to a primary hydroxy group in a similar glucan chain.. Its pathway is glycan biosynthesis; glycogen biosynthesis. Functionally, catalyzes the formation of the alpha-1,6-glucosidic linkages in glycogen by scission of a 1,4-alpha-linked oligosaccharide from growing alpha-1,4-glucan chains and the subsequent attachment of the oligosaccharide to the alpha-1,6 position. The protein is 1,4-alpha-glucan branching enzyme GlgB of Cellvibrio japonicus (strain Ueda107) (Pseudomonas fluorescens subsp. cellulosa).